The following is a 125-amino-acid chain: Histone H2A (125 aa).

The span at 1–18 (MSGRGKGGKAKAKAKSRS) shows a compositional bias: basic residues. A disordered region spans residues 1 to 21 (MSGRGKGGKAKAKAKSRSSRA). Residue Ser-2 is modified to N-acetylserine. Residue Gln-104 is modified to N5-methylglutamine.

It belongs to the histone H2A family. As to quaternary structure, the nucleosome is a histone octamer containing two molecules each of H2A, H2B, H3 and H4 assembled in one H3-H4 heterotetramer and two H2A-H2B heterodimers. The octamer wraps approximately 147 bp of DNA.

Its subcellular location is the nucleus. It is found in the chromosome. Core component of nucleosome. Nucleosomes wrap and compact DNA into chromatin, limiting DNA accessibility to the cellular machineries which require DNA as a template. Histones thereby play a central role in transcription regulation, DNA repair, DNA replication and chromosomal stability. DNA accessibility is regulated via a complex set of post-translational modifications of histones, also called histone code, and nucleosome remodeling. The sequence is that of Histone H2A from Mytilus trossulus (Blue mussel).